A 397-amino-acid polypeptide reads, in one-letter code: Succinate--CoA ligase [ADP-forming] subunit beta (397 aa).

The ATP-grasp domain maps to 9-254; it reads KALLKGYGAP…ETEEDAKEIE (246 aa). ATP contacts are provided by residues Lys-46, 53-55, Glu-109, Ala-112, and Glu-117; that span reads GRG. Residues Asn-209 and Asp-223 each contribute to the Mg(2+) site. Substrate-binding positions include Asn-274 and 331 to 333; that span reads GIM.

The protein belongs to the succinate/malate CoA ligase beta subunit family. As to quaternary structure, heterotetramer of two alpha and two beta subunits. Mg(2+) is required as a cofactor.

It carries out the reaction succinate + ATP + CoA = succinyl-CoA + ADP + phosphate. It catalyses the reaction GTP + succinate + CoA = succinyl-CoA + GDP + phosphate. The protein operates within carbohydrate metabolism; tricarboxylic acid cycle; succinate from succinyl-CoA (ligase route): step 1/1. In terms of biological role, succinyl-CoA synthetase functions in the citric acid cycle (TCA), coupling the hydrolysis of succinyl-CoA to the synthesis of either ATP or GTP and thus represents the only step of substrate-level phosphorylation in the TCA. The beta subunit provides nucleotide specificity of the enzyme and binds the substrate succinate, while the binding sites for coenzyme A and phosphate are found in the alpha subunit. This Rhizobium etli (strain CIAT 652) protein is Succinate--CoA ligase [ADP-forming] subunit beta.